We begin with the raw amino-acid sequence, 166 residues long: Large ribosomal subunit protein uL10 (166 aa).

The protein belongs to the universal ribosomal protein uL10 family. As to quaternary structure, part of the ribosomal stalk of the 50S ribosomal subunit. The N-terminus interacts with L11 and the large rRNA to form the base of the stalk. The C-terminus forms an elongated spine to which L12 dimers bind in a sequential fashion forming a multimeric L10(L12)X complex.

Functionally, forms part of the ribosomal stalk, playing a central role in the interaction of the ribosome with GTP-bound translation factors. In Staphylococcus epidermidis (strain ATCC 35984 / DSM 28319 / BCRC 17069 / CCUG 31568 / BM 3577 / RP62A), this protein is Large ribosomal subunit protein uL10.